Consider the following 148-residue polypeptide: Deoxyuridine 5'-triphosphate nucleotidohydrolase (148 aa).

Substrate-binding positions include 67 to 69, Asn80, 84 to 86, and Lys94; these read RSG and TID.

Belongs to the dUTPase family. Mg(2+) serves as cofactor.

The enzyme catalyses dUTP + H2O = dUMP + diphosphate + H(+). It functions in the pathway pyrimidine metabolism; dUMP biosynthesis; dUMP from dCTP (dUTP route): step 2/2. This enzyme is involved in nucleotide metabolism: it produces dUMP, the immediate precursor of thymidine nucleotides and it decreases the intracellular concentration of dUTP so that uracil cannot be incorporated into DNA. In Orientia tsutsugamushi (strain Ikeda) (Rickettsia tsutsugamushi), this protein is Deoxyuridine 5'-triphosphate nucleotidohydrolase.